A 314-amino-acid polypeptide reads, in one-letter code: Zinc transporter ZIP3 (314 aa).

The Extracellular segment spans residues 1–3 (MVK). Residues 4 to 24 (LLVAKILCMVGMFFFMLLGSL) traverse the membrane as a helical segment. At 25–42 (LPVKIIEMDFEKAHRSKK) the chain is on the cytoplasmic side. The helical transmembrane segment at 43–63 (ILSLCNTFGGGVFLATCFNAL) threads the bilayer. At 64-85 (LPAVREKLKEVLTLAHISTDYP) the chain is on the extracellular side. The helical transmembrane segment at 86-106 (LAETIMLLGFFMTVFLEQLVL) threads the bilayer. At 107 to 169 (TFRKERPAFI…QELSRSSPLR (63 aa)) the chain is on the cytoplasmic side. Residues S125 and S129 each carry the phosphoserine modification. A helical membrane pass occupies residues 170–190 (LLSLVFALSAHSVFEGLALGL). Topologically, residues 191–196 (QEEGEK) are extracellular. The chain crosses the membrane as a helical span at residues 197 to 217 (VVSLFVGVAIHETLVAVALGI). Over 218–229 (NMARSAMALRDA) the chain is Cytoplasmic. The chain crosses the membrane as a helical span at residues 230–250 (AKLAVTVSAMIPLGISLGLGI). Residues 251–262 (DSAQGMPSSVAS) lie on the Extracellular side of the membrane. The chain crosses the membrane as a helical span at residues 263–283 (VLLQGLAGGTFLFVTFFEILA). Residues 284–292 (KELEEKSDR) lie on the Cytoplasmic side of the membrane. Residues 293 to 313 (LLKVLFLVLGYTVLAGMVFIK) traverse the membrane as a helical segment. W314 is a topological domain (extracellular).

It belongs to the ZIP transporter (TC 2.A.5) family.

The protein resides in the cell membrane. It is found in the apical cell membrane. The catalysed reaction is Zn(2+)(in) = Zn(2+)(out). Functionally, transporter for the divalent cation Zn(2+). Mediates the influx of Zn(2+) into cells from extracellular space. Controls Zn(2+) accumulation into dentate gyrus granule cells in the hippocampus. Mediates Zn(2+) reuptake from the secreted milk within the alveolar lumen. The protein is Zinc transporter ZIP3 (SLC39A3) of Bos taurus (Bovine).